Here is a 422-residue protein sequence, read N- to C-terminus: MIDTKALINQFDEIKSRLAIKKVSEETLSALKDMALKYKSCKQELEELQAFQNKTSKLFGEYKREQKDITALKVALDENKVKMSTLESTLKEIESHLETLAYGIPNLPDDATPEGEDENDNVEIKKVLSPPHFDFVPKEHWELGIANGWIDFEAGVKLAKSRFSVLRGMGAKLNRALINFMLDYNEKAGFESIVTPVIVNARALFGTGQLPKFEEDMFKVDSHFCDEQSEHDLYLISTSEITLTNLYQDSIIPSEELPIMLTAQTPCFRKEAGSAGRDTRGMIRQHQFDKVELVAITHPTQSAAMQEKMVQTASEILSELKLPHRLMQLCGGDLGFSASNTIDIEVWLPGQNCYREISSISNTRDFQARRAKIRYKENGKNALVHTLNGSSLAVGRTLIAIMENYQQVDGSVMIPEVLQKYL.

238–240 (TSE) contributes to the L-serine binding site. Residue 269 to 271 (RKE) participates in ATP binding. Position 292 (E292) interacts with L-serine. 356–359 (EISS) provides a ligand contact to ATP. S390 contributes to the L-serine binding site.

Belongs to the class-II aminoacyl-tRNA synthetase family. Type-1 seryl-tRNA synthetase subfamily. Homodimer. The tRNA molecule binds across the dimer.

Its subcellular location is the cytoplasm. It carries out the reaction tRNA(Ser) + L-serine + ATP = L-seryl-tRNA(Ser) + AMP + diphosphate + H(+). It catalyses the reaction tRNA(Sec) + L-serine + ATP = L-seryl-tRNA(Sec) + AMP + diphosphate + H(+). The protein operates within aminoacyl-tRNA biosynthesis; selenocysteinyl-tRNA(Sec) biosynthesis; L-seryl-tRNA(Sec) from L-serine and tRNA(Sec): step 1/1. Its function is as follows. Catalyzes the attachment of serine to tRNA(Ser). Is also able to aminoacylate tRNA(Sec) with serine, to form the misacylated tRNA L-seryl-tRNA(Sec), which will be further converted into selenocysteinyl-tRNA(Sec). This is Serine--tRNA ligase from Helicobacter hepaticus (strain ATCC 51449 / 3B1).